A 673-amino-acid polypeptide reads, in one-letter code: MKQGIFMIKQQIEELRQLLRHHEYQYHVLDNPQIPDSEYDRLFHQLKALEQQYPEYASENSPTQRVGAKPLSNFAQVKHDIPMLSLDNAFSDEDFFAFVKRIQDRLIHVHHSLTFCCEPKLDGLAVSILYINGQLVQAATRGDGTTGEDITANIRTIRNIPLQLLTDNPPARLEVRGEVFMSQAGFEKLNKTALAKGEKTFANPRNAAAGSLRQLDPKITGQRPLMLNAYGIGIAEGVELPDTHFARLQWLKSIGIPVNNEIQLCHGIEKVLDFYRTIKQKRSSLGYDIDGTVLKINDIDLQQQLGFISKAPRWAIAYKFPAQEELTILNNVEFQVGRTGAITPVAKLEPVFVAGVTVSNATLHNGDEIARLDIAIGDTVIVRRAGDVIPQIIGVLHERRPENAKSIIFPSNCPVCDSVISKIEGEAVARCTGGLICAAQRKEALKHFVSRKAMDIDGIGAKLIEQLVERELVHTPADLFKLDQVTLMRLERMGAKSAENALASLAKAKKTTLARFIFALGIREVGETTALNLATHFKTLEAFENATFEQLQKVQDVGEVVAKRIRSFWSEPHNVAVVKDLIAQGIHWDDVEVKEVRDNPLKGKTVVLTGTLTKMGRSEAKEYLLQLGCKVSGSVSSKTDFVIAGESAGSKLTKATELGINILSENEFLALLA.

Residues 36–40, 85–86, and E118 contribute to the NAD(+) site; these read DSEYD and SL. Catalysis depends on K120, which acts as the N6-AMP-lysine intermediate. The NAD(+) site is built by R141, E178, K295, and K319. Zn(2+)-binding residues include C413, C416, C431, and C437. Residues 596–673 form the BRCT domain; the sequence is VRDNPLKGKT…SENEFLALLA (78 aa).

Belongs to the NAD-dependent DNA ligase family. LigA subfamily. The cofactor is Mg(2+). Requires Mn(2+) as cofactor.

The enzyme catalyses NAD(+) + (deoxyribonucleotide)n-3'-hydroxyl + 5'-phospho-(deoxyribonucleotide)m = (deoxyribonucleotide)n+m + AMP + beta-nicotinamide D-nucleotide.. DNA ligase that catalyzes the formation of phosphodiester linkages between 5'-phosphoryl and 3'-hydroxyl groups in double-stranded DNA using NAD as a coenzyme and as the energy source for the reaction. It is essential for DNA replication and repair of damaged DNA. This is DNA ligase from Histophilus somni (strain 129Pt) (Haemophilus somnus).